Consider the following 465-residue polypeptide: BTB/POZ and MATH domain-containing protein 4 (465 aa).

The interval 12 to 40 (LQRQNPLQKSEQQRRNFEMPSPPTTTSLS) is disordered. Residues 46–180 (NGSHSFTIKG…DDCLKINCTV (135 aa)) enclose the MATH domain. The BTB domain maps to 216 to 282 (SDITFNVSGE…IYKDALIEDA (67 aa)). Disordered stretches follow at residues 395–429 (SGGG…INGG) and 441–465 (VNAN…ELED). Residues 442–458 (NANGSGRNNNDNNNSDD) are compositionally biased toward low complexity.

This sequence belongs to the Tdpoz family. In terms of assembly, interacts with RAP2-4. Binds to MYB56 at the promoter of FLOWERING LOCUS T (FT). As to expression, ubiquitous.

It localises to the cytoplasm. It participates in protein modification; protein ubiquitination. Functionally, may act as a substrate-specific adapter of an E3 ubiquitin-protein ligase complex (CUL3-RBX1-BTB) which mediates the ubiquitination and subsequent proteasomal degradation of target proteins. In Arabidopsis thaliana (Mouse-ear cress), this protein is BTB/POZ and MATH domain-containing protein 4 (BPM4).